The sequence spans 495 residues: uncharacterized protein (495 aa).

A run of 12 helical transmembrane segments spans residues 43 to 63 (IIISFMTMLCMYGSSVFMPSI), 75 to 95 (TLVVLGATLYVIGVMLGPLIF), 106 to 126 (PLNIFGYTLFALMQIPTALSV), 128 to 148 (LAMFVVFRFFSGFFGSVGLGI), 168 to 188 (IYFLGICLGPAIAPIASGFIA), 196 to 216 (WEFWILLMLSGVSLLAGVVFL), 284 to 304 (PIMILISLIVGTVYGILYLLF), 323 to 343 (GLTYISLSIGQVFAVFVLLPL), 366 to 386 (PMAFLGCFAIMTGMFIFGWTV), 390 to 410 (VFWFVPLIGTTLVGAGFVMTF), 426 to 446 (ASAMAAIAIPRNIFGACFPLF), and 461 to 481 (SLLAFLLVAINFSIAALYMFG).

It belongs to the major facilitator superfamily. CAR1 family.

The protein localises to the membrane. This is an uncharacterized protein from Schizosaccharomyces pombe (strain 972 / ATCC 24843) (Fission yeast).